The sequence spans 192 residues: Flavin prenyltransferase UbiX (192 aa).

FMN-binding positions include 10–12, Ser36, 92–95, and Arg127; these read GAS and SMTT. Dimethylallyl phosphate is bound by residues Tyr157 and Lys173.

This sequence belongs to the UbiX/PAD1 family.

It carries out the reaction dimethylallyl phosphate + FMNH2 = prenylated FMNH2 + phosphate. In terms of biological role, flavin prenyltransferase that catalyzes the synthesis of the prenylated FMN cofactor (prenyl-FMN) for 4-hydroxy-3-polyprenylbenzoic acid decarboxylase UbiD. The prenyltransferase is metal-independent and links a dimethylallyl moiety from dimethylallyl monophosphate (DMAP) to the flavin N5 and C6 atoms of FMN. In Chlamydia pneumoniae (Chlamydophila pneumoniae), this protein is Flavin prenyltransferase UbiX.